A 540-amino-acid polypeptide reads, in one-letter code: Phosphoenolpyruvate carboxykinase (ATP) (540 aa).

3 residues coordinate substrate: arginine 67, tyrosine 207, and lysine 213. ATP-binding positions include lysine 213, histidine 232, and 248–256; that span reads GLSGTGKTT. 2 residues coordinate Mn(2+): lysine 213 and histidine 232. Aspartate 269 contacts Mn(2+). ATP contacts are provided by residues glutamate 297, arginine 333, 449 to 450, and threonine 455; that span reads RI. Arginine 333 serves as a coordination point for substrate.

This sequence belongs to the phosphoenolpyruvate carboxykinase (ATP) family. Monomer. Requires Mn(2+) as cofactor.

The protein resides in the cytoplasm. The enzyme catalyses oxaloacetate + ATP = phosphoenolpyruvate + ADP + CO2. The protein operates within carbohydrate biosynthesis; gluconeogenesis. In terms of biological role, involved in the gluconeogenesis. Catalyzes the conversion of oxaloacetate (OAA) to phosphoenolpyruvate (PEP) through direct phosphoryl transfer between the nucleoside triphosphate and OAA. This chain is Phosphoenolpyruvate carboxykinase (ATP), found in Aliivibrio fischeri (strain MJ11) (Vibrio fischeri).